Here is a 145-residue protein sequence, read N- to C-terminus: Putative pre-16S rRNA nuclease (145 aa).

It belongs to the YqgF nuclease family.

The protein resides in the cytoplasm. In terms of biological role, could be a nuclease involved in processing of the 5'-end of pre-16S rRNA. This chain is Putative pre-16S rRNA nuclease, found in Pseudomonas fluorescens (strain SBW25).